A 166-amino-acid chain; its full sequence is Myosin regulatory light chain 2, ventricular/cardiac muscle isoform (166 aa).

Ser-2 bears the N,N,N-trimethylserine mark. Position 14 is a deamidated asparagine (Asn-14). Residue Ser-19 is modified to Phosphoserine. EF-hand domains are found at residues 24 to 59, 94 to 129, and 130 to 165; these read TQIQ…LGRV, DPEE…QAER, and FSKE…GEEK. Positions 37, 39, 41, and 48 each coordinate Ca(2+). At Thr-52 the chain carries Phosphothreonine.

In terms of assembly, myosin is a hexamer of 2 heavy chains and 4 light chains. Interacts with MYOC. N-terminus is methylated by METTL11A/NTM1. In terms of processing, phosphorylated by MYLK3 and MYLK2; promotes cardiac muscle contraction and function. Dephosphorylated by PPP1CB complexed to PPP1R12B. The phosphorylated form in adult is expressed as gradients across the heart from endocardium (low phosphorylation) to epicardium (high phosphorylation); regulates cardiac torsion and workload distribution.

The protein resides in the cytoplasm. Its subcellular location is the myofibril. It localises to the sarcomere. It is found in the a band. Functionally, contractile protein that plays a role in heart development and function. Following phosphorylation, plays a role in cross-bridge cycling kinetics and cardiac muscle contraction by increasing myosin lever arm stiffness and promoting myosin head diffusion; as a consequence of the increase in maximum contraction force and calcium sensitivity of contraction force. These events altogether slow down myosin kinetics and prolong duty cycle resulting in accumulated myosins being cooperatively recruited to actin binding sites to sustain thin filament activation as a means to fine-tune myofilament calcium sensitivity to force. During cardiogenesis plays an early role in cardiac contractility by promoting cardiac myofibril assembly. The chain is Myosin regulatory light chain 2, ventricular/cardiac muscle isoform from Bos taurus (Bovine).